The sequence spans 98 residues: EKC/KEOPS complex subunit GON7 (98 aa).

M1 is modified (N-acetylmethionine). The segment at D55 to S98 is disordered. Over residues E61–N79 the composition is skewed to acidic residues.

In terms of assembly, component of the EKC/KEOPS complex composed of at least GON7, TP53RK, TPRKB, OSGEP and LAGE3; the whole complex dimerizes.

It is found in the nucleus. Its function is as follows. Component of the EKC/KEOPS complex that is required for the formation of a threonylcarbamoyl group on adenosine at position 37 (t(6)A37) in tRNAs that read codons beginning with adenine. The complex is probably involved in the transfer of the threonylcarbamoyl moiety of threonylcarbamoyl-AMP (TC-AMP) to the N6 group of A37. GON7 plays a supporting role to the catalytic subunit OSGEP in the complex. The polypeptide is EKC/KEOPS complex subunit GON7 (Mus musculus (Mouse)).